We begin with the raw amino-acid sequence, 183 residues long: Translation initiation factor IF-3 (183 aa).

The span at 1 to 13 shows a compositional bias: polar residues; sequence MKQPDRNQQQGAK. Positions 1–21 are disordered; that stretch reads MKQPDRNQQQGAKSNRPAIND.

The protein belongs to the IF-3 family. Monomer.

It is found in the cytoplasm. Its function is as follows. IF-3 binds to the 30S ribosomal subunit and shifts the equilibrium between 70S ribosomes and their 50S and 30S subunits in favor of the free subunits, thus enhancing the availability of 30S subunits on which protein synthesis initiation begins. The chain is Translation initiation factor IF-3 from Acinetobacter baumannii (strain AYE).